The following is a 463-amino-acid chain: Toxin CaTX-A (463 aa).

An N-terminal signal peptide occupies residues 1–18 (MSRGYSLHLVLFLVLSTA).

Belongs to the jellyfish toxin family. Type II subfamily. In terms of assembly, oligomer. Post-translationally, contains disulfide bonds. As to expression, it is suggested that CaTX-B is synthesized in the tentacle, is modified (become CaTX-A) and then migrates to the nematocyst.

The protein resides in the secreted. It is found in the nematocyst. It localises to the target cell membrane. Its function is as follows. Has potent hemolytic activity. Is lethal to crayfish. Causes cutaneous inflammation in humans. May act as a pore-forming toxin, disrupting normal transmembrane ion concentration gradients in susceptible cells. The protein is Toxin CaTX-A of Carybdea alata (Hawaiian box jellyfish).